Consider the following 136-residue polypeptide: TBK1 inhibitor DP96R (136 aa).

The disordered stretch occupies residues 66–86 (NNALEKPAGANNIPEKSAGRM).

Belongs to the asfivirus DP96R family.

Inhibits cGAS-STING-mediated type I IFN expression and NF-kB activation by inhibiting TBK1 and IKBKB/IKKB. Inhibits host TBK1 phosphorylation. The chain is TBK1 inhibitor DP96R from Ornithodoros (relapsing fever ticks).